The primary structure comprises 328 residues: D-cysteine desulfhydrase (328 aa).

The residue at position 51 (Lys-51) is an N6-(pyridoxal phosphate)lysine.

The protein belongs to the ACC deaminase/D-cysteine desulfhydrase family. As to quaternary structure, homodimer. Requires pyridoxal 5'-phosphate as cofactor.

It catalyses the reaction D-cysteine + H2O = hydrogen sulfide + pyruvate + NH4(+) + H(+). Its function is as follows. Catalyzes the alpha,beta-elimination reaction of D-cysteine and of several D-cysteine derivatives. It could be a defense mechanism against D-cysteine. The sequence is that of D-cysteine desulfhydrase from Escherichia coli O157:H7.